Consider the following 654-residue polypeptide: Smc-like protein Sph3 (654 aa).

2 coiled-coil regions span residues 135 to 290 (TDAI…LQTV) and 341 to 503 (IRGT…LTAA).

The protein belongs to the Sph1/Sph2 family.

Its function is as follows. Involved in cell-shape determination. Required for the formation of rods and wild-type-like motility. This is Smc-like protein Sph3 from Haloferax volcanii (strain ATCC 29605 / DSM 3757 / JCM 8879 / NBRC 14742 / NCIMB 2012 / VKM B-1768 / DS2) (Halobacterium volcanii).